We begin with the raw amino-acid sequence, 235 residues long: RING-H2 finger protein ATL33 (235 aa).

The helical transmembrane segment at Leu64 to Asn84 threads the bilayer. Positions Cys87 to Thr133 are disordered. Positions Ser88–Ser103 are enriched in low complexity. The span at Ile116–Ser125 shows a compositional bias: polar residues. The RING-type; atypical zinc finger occupies Cys142–Arg184. Over residues Asn201–Ser216 the composition is skewed to low complexity. Residues Asn201–Val235 form a disordered region.

The protein belongs to the RING-type zinc finger family. ATL subfamily.

It is found in the membrane. The catalysed reaction is S-ubiquitinyl-[E2 ubiquitin-conjugating enzyme]-L-cysteine + [acceptor protein]-L-lysine = [E2 ubiquitin-conjugating enzyme]-L-cysteine + N(6)-ubiquitinyl-[acceptor protein]-L-lysine.. It functions in the pathway protein modification; protein ubiquitination. This is RING-H2 finger protein ATL33 (ATL33) from Arabidopsis thaliana (Mouse-ear cress).